A 134-amino-acid chain; its full sequence is Interleukin-5 (134 aa).

The signal sequence occupies residues 1–19 (MRMLLHLSLLALGAAYVSA). Residues asparagine 76 and asparagine 90 are each glycosylated (N-linked (GlcNAc...) asparagine).

This sequence belongs to the IL-5 family. As to quaternary structure, homodimer; disulfide-linked. Interacts with IL5RA. Interacts with CSF2RB.

Its subcellular location is the secreted. Homodimeric cytokine expressed predominantly by T-lymphocytes and NK cells that plays an important role in the survival, differentiation, and chemotaxis of eosinophils. Also acts on activated and resting B-cells to induce immunoglobulin production, growth, and differentiation. Mechanistically, exerts its biological effects through a receptor composed of IL5RA subunit and the cytokine receptor common subunit beta/CSF2RB. Binding to the receptor leads to activation of various kinases including LYN, SYK and JAK2 and thereby propagates signals through the RAS-MAPK and JAK-STAT5 pathways respectively. This chain is Interleukin-5 (IL5), found in Felis catus (Cat).